We begin with the raw amino-acid sequence, 86 residues long: Small ribosomal subunit protein bS20 (86 aa).

The span at 1-11 (MANIKSAKKRA) shows a compositional bias: basic residues. Positions 1 to 26 (MANIKSAKKRAITSEKNRQHNASRRS) are disordered.

Belongs to the bacterial ribosomal protein bS20 family.

Binds directly to 16S ribosomal RNA. The protein is Small ribosomal subunit protein bS20 of Pseudoalteromonas translucida (strain TAC 125).